The chain runs to 391 residues: 1-deoxy-D-xylulose 5-phosphate reductoisomerase (391 aa).

Residues Thr-11, Gly-12, Ser-13, Ile-14, Gly-37, Asn-39, and Asn-125 each contribute to the NADPH site. Lys-126 serves as a coordination point for 1-deoxy-D-xylulose 5-phosphate. Residue Glu-127 participates in NADPH binding. A Mn(2+)-binding site is contributed by Asp-151. Ser-152, Glu-153, Ser-176, and His-199 together coordinate 1-deoxy-D-xylulose 5-phosphate. Mn(2+) is bound at residue Glu-153. Residue Gly-205 coordinates NADPH. Residues Ser-212, Asn-217, Lys-218, and Glu-221 each coordinate 1-deoxy-D-xylulose 5-phosphate. Glu-221 provides a ligand contact to Mn(2+).

The protein belongs to the DXR family. Mg(2+) is required as a cofactor. Requires Mn(2+) as cofactor.

The catalysed reaction is 2-C-methyl-D-erythritol 4-phosphate + NADP(+) = 1-deoxy-D-xylulose 5-phosphate + NADPH + H(+). It participates in isoprenoid biosynthesis; isopentenyl diphosphate biosynthesis via DXP pathway; isopentenyl diphosphate from 1-deoxy-D-xylulose 5-phosphate: step 1/6. Functionally, catalyzes the NADPH-dependent rearrangement and reduction of 1-deoxy-D-xylulose-5-phosphate (DXP) to 2-C-methyl-D-erythritol 4-phosphate (MEP). This Heliobacterium modesticaldum (strain ATCC 51547 / Ice1) protein is 1-deoxy-D-xylulose 5-phosphate reductoisomerase.